The primary structure comprises 208 residues: Uracil phosphoribosyltransferase (208 aa).

5-phospho-alpha-D-ribose 1-diphosphate contacts are provided by residues arginine 78, arginine 103, and 130-138 (DPMLATANS). Uracil is bound by residues isoleucine 193 and 198 to 200 (GDA). Aspartate 199 lines the 5-phospho-alpha-D-ribose 1-diphosphate pocket.

This sequence belongs to the UPRTase family. The cofactor is Mg(2+).

It carries out the reaction UMP + diphosphate = 5-phospho-alpha-D-ribose 1-diphosphate + uracil. It functions in the pathway pyrimidine metabolism; UMP biosynthesis via salvage pathway; UMP from uracil: step 1/1. With respect to regulation, allosterically activated by GTP. Its function is as follows. Catalyzes the conversion of uracil and 5-phospho-alpha-D-ribose 1-diphosphate (PRPP) to UMP and diphosphate. The protein is Uracil phosphoribosyltransferase of Brucella melitensis biotype 2 (strain ATCC 23457).